Here is a 517-residue protein sequence, read N- to C-terminus: FERM domain-containing protein 5 (517 aa).

Residues 17–298 (YSCTVRLLDD…ENQAFYKLEK (282 aa)) form the FERM domain. Residues 308-353 (SNLFFKGSRFRYSGRVAKEVMESSAKIKREPPEIHRAGMVPSRSCP) form an interaction with ROCK1 region. Residues 344–367 (AGMVPSRSCPSITHGPRLSSVPRT) form a disordered region. Position 375 is a phosphoserine (S375). Disordered regions lie at residues 385 to 408 (DSAH…VRSS) and 485 to 517 (GHGG…VPLD). A compositionally biased stretch (polar residues) spans 388-398 (HSTPVRSSSHG). The segment covering 498 to 517 (KGPQLQQQQWKGWGKSVPLD) has biased composition (low complexity).

In terms of assembly, interacts with CTNND1, ITGB5 (via cytoplasmic domain) and ROCK1.

Its subcellular location is the cell junction. It is found in the adherens junction. Its function is as follows. May be involved in regulation of cell migration. May regulate cell-matrix interactions via its interaction with ITGB5 and modifying ITGB5 cytoplasmic tail interactions such as with FERMT2 and TLN1. May regulate ROCK1 kinase activity possibly involved in regulation of actin stress fiber formation. The chain is FERM domain-containing protein 5 (Frmd5) from Mus musculus (Mouse).